The chain runs to 157 residues: MFDVLMYLFETYIHTEAELRVDQDKLEQDLTDAGFDREDIYNALLWLEKLADYQEGLAEPMQLASDPLSMRIYTPEECERLDASCRGFLLFLEQIQVINLETREMVIERVLALDTAEFDLEDLKWVILMVLFNIPGCENAYQQMEELLFEVNEGMLH.

This sequence belongs to the Smg family.

This is Protein Smg from Escherichia coli O6:H1 (strain CFT073 / ATCC 700928 / UPEC).